A 399-amino-acid polypeptide reads, in one-letter code: E3 ubiquitin-protein ligase APD4 (399 aa).

Transmembrane regions (helical) follow at residues F42–G62 and L284–F304. Residues C348 to R387 form an RING-type zinc finger.

Expressed in the shoot apical meristems (SAM), root tips and inflorescences.

The protein localises to the endomembrane system. It is found in the vacuole membrane. The catalysed reaction is S-ubiquitinyl-[E2 ubiquitin-conjugating enzyme]-L-cysteine + [acceptor protein]-L-lysine = [E2 ubiquitin-conjugating enzyme]-L-cysteine + N(6)-ubiquitinyl-[acceptor protein]-L-lysine.. It participates in protein modification; protein ubiquitination. Its function is as follows. Involved in pollen mitosis II (PMII) regulation during male gametogenesis. This Arabidopsis thaliana (Mouse-ear cress) protein is E3 ubiquitin-protein ligase APD4.